We begin with the raw amino-acid sequence, 198 residues long: Protein GrpE (198 aa).

Residues 1 to 58 form a disordered region; that stretch reads MTEKDQSVNNEEFAEKEDNTAKDSNTDEQIEKTASEDDVQNDSSAVDDKEKEIQQLKE. Composition is skewed to basic and acidic residues over residues 16–35 and 46–58; these read KEDNTAKDSNTDEQIEKTAS and VDDKEKEIQQLKE.

This sequence belongs to the GrpE family. Homodimer.

It is found in the cytoplasm. Its function is as follows. Participates actively in the response to hyperosmotic and heat shock by preventing the aggregation of stress-denatured proteins, in association with DnaK and GrpE. It is the nucleotide exchange factor for DnaK and may function as a thermosensor. Unfolded proteins bind initially to DnaJ; upon interaction with the DnaJ-bound protein, DnaK hydrolyzes its bound ATP, resulting in the formation of a stable complex. GrpE releases ADP from DnaK; ATP binding to DnaK triggers the release of the substrate protein, thus completing the reaction cycle. Several rounds of ATP-dependent interactions between DnaJ, DnaK and GrpE are required for fully efficient folding. The chain is Protein GrpE from Staphylococcus carnosus (strain TM300).